We begin with the raw amino-acid sequence, 212 residues long: ATP phosphoribosyltransferase (212 aa).

It belongs to the ATP phosphoribosyltransferase family. Short subfamily. As to quaternary structure, heteromultimer composed of HisG and HisZ subunits.

Its subcellular location is the cytoplasm. It catalyses the reaction 1-(5-phospho-beta-D-ribosyl)-ATP + diphosphate = 5-phospho-alpha-D-ribose 1-diphosphate + ATP. Its pathway is amino-acid biosynthesis; L-histidine biosynthesis; L-histidine from 5-phospho-alpha-D-ribose 1-diphosphate: step 1/9. Its function is as follows. Catalyzes the condensation of ATP and 5-phosphoribose 1-diphosphate to form N'-(5'-phosphoribosyl)-ATP (PR-ATP). Has a crucial role in the pathway because the rate of histidine biosynthesis seems to be controlled primarily by regulation of HisG enzymatic activity. The chain is ATP phosphoribosyltransferase from Citrifermentans bemidjiense (strain ATCC BAA-1014 / DSM 16622 / JCM 12645 / Bem) (Geobacter bemidjiensis).